Reading from the N-terminus, the 388-residue chain is P2X purinoceptor 4 (388 aa).

The Cytoplasmic segment spans residues 1 to 33 (MAGCCSVLGSFLFEYDTPRIVLIRSRKVGLMNR). The helical transmembrane segment at 34 to 54 (VVQLLILAYVIGWVFVWEKGY) threads the bilayer. Over 55 to 338 (QETDSVVSSV…KFDIIPTMIN (284 aa)) the chain is Extracellular. Residues Lys-67 and Lys-69 each contribute to the ATP site. Lys-67 and Lys-69 together coordinate CTP. 5 N-linked (GlcNAc...) asparagine glycosylation sites follow: Asn-75, Asn-110, Asn-131, Asn-153, and Asn-184. Intrachain disulfides connect Cys-116-Cys-165, Cys-126-Cys-149, and Cys-132-Cys-159. Residues Thr-186 and Leu-188 each contribute to the ATP site. A CTP-binding site is contributed by Thr-186. Residues Asn-199 and Asn-208 are each glycosylated (N-linked (GlcNAc...) asparagine). Intrachain disulfides connect Cys-217–Cys-227 and Cys-261–Cys-270. ATP is bound by residues Asn-293, Arg-295, and Lys-313. Positions 293, 295, and 313 each coordinate CTP. Residues 339–359 (VGSGLALLGVATVLCDVIVLY) traverse the membrane as a helical segment. Over 360 to 388 (CMKKRYYYRDKKYKYVEDYEQGLSGEMNQ) the chain is Cytoplasmic.

Belongs to the P2X receptor family. As to quaternary structure, functional P2RXs are organized as homomeric and heteromeric trimers. Functional P2XRs are organized as homomeric and heteromeric trimers. Forms heterotrimer with P2RX1. Interacts with P2RX7 (via C-terminus); this interaction is functional only in the presence of ATP. Forms heterotrimer with P2RX4; functional differences between homomeric P2RX4 and P2RX4/6 heterotrimer are minor. Interacts with AP1M2.

The protein resides in the cell membrane. The protein localises to the lysosome membrane. It carries out the reaction K(+)(in) = K(+)(out). The enzyme catalyses Na(+)(in) = Na(+)(out). It catalyses the reaction Ca(2+)(in) = Ca(2+)(out). Activated by ATP. pH-dependent and inhibited by acidic pH. Functionally, ATP-gated nonselective transmembrane cation channel permeable to potassium, sodium and calcium. CTP, but not GTP or UTP, functions as a weak affinity agonist for P2RX4. Activated by extracellularly released ATP, it plays multiple role in immunity and central nervous system physiology. Plays a key role in initial steps of T-cell activation and Ca(2+) microdomain formation. Also participates in basal T-cell activity without TCR/CD3 stimulation. Promotes the differentiation and activation of Th17 cells via expression of retinoic acid-related orphan receptor C/RORC. Upon activation, drives microglia motility via the PI3K/Akt pathway. Could also function as an ATP-gated cation channel of lysosomal membranes. The polypeptide is P2X purinoceptor 4 (P2rx4) (Mus musculus (Mouse)).